The chain runs to 1517 residues: DNA-directed RNA polymerase subunit beta' (1517 aa).

Zn(2+) is bound by residues C71, C73, C86, and C89. D482, D484, and D486 together coordinate Mg(2+). Zn(2+) contacts are provided by C812, C886, C893, and C896.

It belongs to the RNA polymerase beta' chain family. The RNAP catalytic core consists of 2 alpha, 1 beta, 1 beta' and 1 omega subunit. When a sigma factor is associated with the core the holoenzyme is formed, which can initiate transcription. Requires Mg(2+) as cofactor. Zn(2+) is required as a cofactor.

The catalysed reaction is RNA(n) + a ribonucleoside 5'-triphosphate = RNA(n+1) + diphosphate. DNA-dependent RNA polymerase catalyzes the transcription of DNA into RNA using the four ribonucleoside triphosphates as substrates. The sequence is that of DNA-directed RNA polymerase subunit beta' from Campylobacter jejuni (strain RM1221).